We begin with the raw amino-acid sequence, 146 residues long: 16.0 kDa heat shock protein, peroxisomal (146 aa).

One can recognise a sHSP domain in the interval 23–143 (WASASATAAM…RPRTRPIAVS (121 aa)). A Microbody targeting signal motif is present at residues 144–146 (SKL).

The protein belongs to the small heat shock protein (HSP20) family. May form oligomeric structures.

The protein localises to the peroxisome. This Oryza sativa subsp. japonica (Rice) protein is 16.0 kDa heat shock protein, peroxisomal (HSP16.0).